The following is a 429-amino-acid chain: Adenylosuccinate synthetase (429 aa).

GTP is bound by residues 15-21 (GDEGKGK) and 43-45 (GHV). Catalysis depends on aspartate 16, which acts as the Proton acceptor. Positions 16 and 43 each coordinate Mg(2+). IMP contacts are provided by residues 16–19 (DEGK), 41–44 (NAGH), threonine 131, arginine 145, glutamine 225, threonine 240, and arginine 304. The active-site Proton donor is histidine 44. 300 to 306 (SNTKRPR) contacts substrate. GTP is bound by residues arginine 306, 332-334 (LLD), and 414-416 (SVG).

The protein belongs to the adenylosuccinate synthetase family. Homodimer. Mg(2+) serves as cofactor.

Its subcellular location is the cytoplasm. The catalysed reaction is IMP + L-aspartate + GTP = N(6)-(1,2-dicarboxyethyl)-AMP + GDP + phosphate + 2 H(+). The protein operates within purine metabolism; AMP biosynthesis via de novo pathway; AMP from IMP: step 1/2. In terms of biological role, plays an important role in the de novo pathway of purine nucleotide biosynthesis. Catalyzes the first committed step in the biosynthesis of AMP from IMP. The chain is Adenylosuccinate synthetase from Mesoplasma florum (strain ATCC 33453 / NBRC 100688 / NCTC 11704 / L1) (Acholeplasma florum).